We begin with the raw amino-acid sequence, 204 residues long: uncharacterized protein (204 aa).

The protein localises to the cytoplasm. It is found in the nucleus. This is an uncharacterized protein from Schizosaccharomyces pombe (strain 972 / ATCC 24843) (Fission yeast).